Here is a 694-residue protein sequence, read N- to C-terminus: GRB2-associated-binding protein 1 (694 aa).

An N-acetylserine modification is found at serine 2. The PH domain occupies 5–116; the sequence is EVVCSGWLRK…WVRCICDICG (112 aa). Positions 194 to 203 are enriched in basic and acidic residues; sequence PEPTRTHADS. Residues 194–231 are disordered; that stretch reads PEPTRTHADSAKSTSSETDCNDNVPSHKNPASSQSKHG. Over residues 204-230 the composition is skewed to polar residues; that stretch reads AKSTSSETDCNDNVPSHKNPASSQSKH. Serine 251, serine 253, serine 266, and serine 304 each carry phosphoserine. The segment at 309–378 is disordered; it reads IPPTPGNTYQ…TDSSYCIPTA (70 aa). Over residues 358–374 the composition is skewed to polar residues; the sequence is DTCSITRTASDTDSSYC. Position 387 is a phosphothreonine (threonine 387). Residues serine 402 and serine 454 each carry the phosphoserine modification. Disordered regions lie at residues 492 to 532 and 560 to 656; these read PAHM…VKPA and DSSR…ADER. Residues 594–611 show a composition bias toward polar residues; sequence PNLSSEDSNLFGSNSLDG. A Phosphotyrosine modification is found at tyrosine 627. The residue at position 638 (threonine 638) is a Phosphothreonine. At serine 651 the chain carries Phosphoserine. Phosphotyrosine is present on tyrosine 659. The tract at residues 668-694 is disordered; sequence LALKSTREAWTDGRQSTESETPAKNVK. Residues 672–684 are compositionally biased toward basic and acidic residues; that stretch reads STREAWTDGRQST. The residue at position 683 (serine 683) is a Phosphoserine. Residues 685–694 are compositionally biased toward polar residues; the sequence is ESETPAKNVK.

Belongs to the GAB family. Identified in a complex containing FRS2, GRB2, GAB1, PIK3R1 and SOS1. Forms a tripartite complex containing GAB1, METTL13 and SPRY2. Within the complex interacts with METTL13. Interacts with GRB2 and with other SH2-containing proteins. Interacts with phosphorylated LAT2. Interacts with PTPRJ. Interacts (phosphorylated) with PTPN11. Interacts with HCK. Phosphorylated in response to FGFR1 activation. Phosphorylated on tyrosine residue(s) by the epidermal growth factor receptor (EGFR) and the insulin receptor (INSR). Tyrosine phosphorylation of GAB1 mediates interaction with several proteins that contain SH2 domains. Phosphorylated on tyrosine residues by HCK upon IL6 signaling.

Functionally, adapter protein that plays a role in intracellular signaling cascades triggered by activated receptor-type kinases. Plays a role in FGFR1 signaling. Probably involved in signaling by the epidermal growth factor receptor (EGFR) and the insulin receptor (INSR). Involved in the MET/HGF-signaling pathway. This chain is GRB2-associated-binding protein 1 (GAB1), found in Bos taurus (Bovine).